Here is a 377-residue protein sequence, read N- to C-terminus: 4-hydroxy-3-methylbut-2-en-1-yl diphosphate synthase (flavodoxin) (377 aa).

[4Fe-4S] cluster contacts are provided by cysteine 272, cysteine 275, cysteine 307, and glutamate 314.

The protein belongs to the IspG family. [4Fe-4S] cluster serves as cofactor.

The catalysed reaction is (2E)-4-hydroxy-3-methylbut-2-enyl diphosphate + oxidized [flavodoxin] + H2O + 2 H(+) = 2-C-methyl-D-erythritol 2,4-cyclic diphosphate + reduced [flavodoxin]. The protein operates within isoprenoid biosynthesis; isopentenyl diphosphate biosynthesis via DXP pathway; isopentenyl diphosphate from 1-deoxy-D-xylulose 5-phosphate: step 5/6. Its function is as follows. Converts 2C-methyl-D-erythritol 2,4-cyclodiphosphate (ME-2,4cPP) into 1-hydroxy-2-methyl-2-(E)-butenyl 4-diphosphate. This chain is 4-hydroxy-3-methylbut-2-en-1-yl diphosphate synthase (flavodoxin), found in Zymomonas mobilis subsp. mobilis (strain ATCC 31821 / ZM4 / CP4).